The following is a 92-amino-acid chain: Defensin-like protein 96 (92 aa).

The first 29 residues, 1–29 (MGSLRLSTVAIAVVVCLSILLISPTEVDG), serve as a signal peptide directing secretion. 4 disulfides stabilise this stretch: Cys33/Cys80, Cys40/Cys65, Cys49/Cys77, and Cys53/Cys79.

This sequence belongs to the DEFL family.

The protein localises to the secreted. This chain is Defensin-like protein 96, found in Arabidopsis thaliana (Mouse-ear cress).